A 404-amino-acid polypeptide reads, in one-letter code: Cysteine desulfurase IscS (404 aa).

Pyridoxal 5'-phosphate is bound by residues 75–76, Asn155, Gln183, and 203–205; these read AT and SAH. Lys206 carries the post-translational modification N6-(pyridoxal phosphate)lysine. Thr243 contacts pyridoxal 5'-phosphate. Cys328 functions as the Cysteine persulfide intermediate in the catalytic mechanism. Cys328 provides a ligand contact to [2Fe-2S] cluster.

This sequence belongs to the class-V pyridoxal-phosphate-dependent aminotransferase family. NifS/IscS subfamily. In terms of assembly, homodimer. Forms a heterotetramer with IscU, interacts with other sulfur acceptors. Requires pyridoxal 5'-phosphate as cofactor.

It is found in the cytoplasm. The catalysed reaction is (sulfur carrier)-H + L-cysteine = (sulfur carrier)-SH + L-alanine. It participates in cofactor biosynthesis; iron-sulfur cluster biosynthesis. Functionally, master enzyme that delivers sulfur to a number of partners involved in Fe-S cluster assembly, tRNA modification or cofactor biosynthesis. Catalyzes the removal of elemental sulfur atoms from cysteine to produce alanine. Functions as a sulfur delivery protein for Fe-S cluster synthesis onto IscU, an Fe-S scaffold assembly protein, as well as other S acceptor proteins. The polypeptide is Cysteine desulfurase IscS (Vibrio vulnificus (strain YJ016)).